The following is a 989-amino-acid chain: MNMKKKEKHAIRKKSIGVASVLVGTLIGFGLLSSKEADASENSVTQSDSASNESKSNDSSSVSAAPKTDDTNVSDTKTSSNTNNGETSVAQNPAQQETTQSSSTNATTEETPVTGEATTTTTNQANTPATTQSSNTNAEELVNQTSNETTSNDTNTVSSVNSPQNSTNAENVSTTQDTSTEATPSNNESAPQNTDASNKDVVSQAVNPSTPRMRAFSLAAVAADAPAAGTDITNQLTDVKVTIDSGTTVYPHQAGYVKLNYGFSVPNSAVKGDTFKITVPKELNLNGVTSTAKVPPIMAGDQVLANGVIDSDGNVIYTFTDYVDNKENVTANITMPAYIDPENVTKTGNVTLTTGIGTNTASKTVLIDYEKYGQFHNLSIKGTIDQIDKTNNTYRQTIYVNPSGDNVVLPALTGNLIPNTKSNALIDAKNTDIKVYRVDNANDLSESYYVNPSDFEDVTNQVRISFPNANQYKVEFPTDDDQITTPYIVVVNGHIDPASTGDLALRSTFYGYDSNFIWRSMSWDNEVAFNNGSGSGDGIDKPVVPEQPDEPGEIEPIPEDSDSDPGSDSGSDSNSDSGSDSGSDSTSDSGSDSASDSDSASDSDSASDSDSASDSDSASDSDSASDSDSASDSDSASDSDSASDSDSASDSDSASDSDSASDSDSASDSDSDSDSDSDSDSDSDSDSDSDSDSDSDSDSDSDSDSDSDSDSDSDSDSDSDSDSDSDSDSDSDSDSDSDSDSDSDSDSDSDSDSDSDSDSDSDSDSDSDSDSDSDSDSDSDSDSDSDSDSDSDSDSDSDSDSDSDSDSDSDSDSDSDSDSDSASDSDSDSDSESDSDSDSDSDSDSDSDSDSDSDSESDSDSDSDSDSESDSDSDSDSDSDSASDSDSGSDSDSSSDSDSDSTSDTGSDNDSDSDSNSDSESGSNNNVVPPNSPKNGTNASNKNEAKDSKEPLPDTGSEDEANTSLIWGLLASLGSLLLFRRKKENKDKK.

The first 39 residues, 1–39 (MNMKKKEKHAIRKKSIGVASVLVGTLIGFGLLSSKEADA), serve as a signal peptide directing secretion. The YSIRK-G/S signaling motif motif lies at 9-20 (HAIRKKSIGVAS). Disordered stretches follow at residues 34 to 205 (SKEA…VSQA) and 529 to 960 (FNNG…SEDE). Positions 40–542 (SENSVTQSDS…SGSGDGIDKP (503 aa)) are ligand binding A region. Over residues 47–65 (SDSASNESKSNDSSSVSAA) the composition is skewed to low complexity. Residues 71-105 (TNVSDTKTSSNTNNGETSVAQNPAQQETTQSSSTN) are compositionally biased toward polar residues. Composition is skewed to low complexity over residues 106 to 132 (ATTE…ATTQ) and 143 to 162 (NQTS…SVNS). The segment covering 163 to 205 (PQNSTNAENVSTTQDTSTEATPSNNESAPQNTDASNKDVVSQA) has biased composition (polar residues). Residues 547–565 (QPDEPGEIEPIPEDSDSDP) show a composition bias toward acidic residues. A compositionally biased stretch (low complexity) spans 566–598 (GSDSGSDSNSDSGSDSGSDSTSDSGSDSASDSD). Over residues 599–917 (SASDSDSASD…DNDSDSDSNS (319 aa)) the composition is skewed to acidic residues. Low complexity predominate over residues 918-936 (DSESGSNNNVVPPNSPKNG). The segment covering 943–952 (NEAKDSKEPL) has biased composition (basic and acidic residues). The LPXTG sorting signal motif lies at 952-956 (LPDTG). Thr955 bears the Pentaglycyl murein peptidoglycan amidated threonine mark. Positions 956-989 (GSEDEANTSLIWGLLASLGSLLLFRRKKENKDKK) are cleaved as a propeptide — removed by sortase.

It belongs to the serine-aspartate repeat-containing protein (SDr) family.

The protein localises to the secreted. It localises to the cell wall. In terms of biological role, cell surface-associated protein implicated in virulence. Promotes bacterial attachment exclusively to the gamma-chain of human fibrinogen. Induces formation of bacterial clumps, which diminish the ability of group IIA phospholipase A2 to cause bacterial phospholipid hydrolysis and killing. Significantly decreases macrophage phagocytosis possibly thanks to the clumps, clumped bacteria being too large to be phagocytosed. Dominant factor responsible for human platelet aggregation, which may be an important mechanism for initiating infective endocarditis. This is Clumping factor A (clfA) from Staphylococcus aureus (strain N315).